The sequence spans 399 residues: Elongation factor Tu (399 aa).

One can recognise a tr-type G domain in the interval 10–209 (NPHVNIGTIG…EVDSYIPTPE (200 aa)). Positions 19–26 (GHVYHGKT) are G1. 19 to 26 (GHVYHGKT) is a binding site for GTP. Residue Thr-26 coordinates Mg(2+). The G2 stretch occupies residues 60–64 (GITIA). A G3 region spans residues 81 to 84 (DCPG). GTP-binding positions include 81–85 (DCPGH) and 136–139 (NKQD). A G4 region spans residues 136–139 (NKQD). A G5 region spans residues 174-176 (SAL).

It belongs to the TRAFAC class translation factor GTPase superfamily. Classic translation factor GTPase family. EF-Tu/EF-1A subfamily. As to quaternary structure, monomer.

The protein localises to the cytoplasm. It carries out the reaction GTP + H2O = GDP + phosphate + H(+). Functionally, GTP hydrolase that promotes the GTP-dependent binding of aminoacyl-tRNA to the A-site of ribosomes during protein biosynthesis. In Helicobacter pylori (strain J99 / ATCC 700824) (Campylobacter pylori J99), this protein is Elongation factor Tu.